Consider the following 318-residue polypeptide: Transcription factor MYBS3 (318 aa).

Disordered regions lie at residues 1-20 (MTRRCSHCSHNGHNSRTCPN) and 50-98 (AAGS…PWTE). A CCHC-type zinc finger spans residues 3 to 20 (RRCSHCSHNGHNSRTCPN). Residues 8-18 (CSHNGHNSRTC) are compositionally biased toward polar residues. The segment covering 50-77 (AAGSTSGGASPADGPDAAPTAADGYASD) has biased composition (low complexity). Positions 88–144 (RDRKKGVPWTEEEHRRFLLGLQKLGKGDWRGISRNFVVSRTPTQVASHAQKYFIRQS) constitute an HTH myb-type domain. The H-T-H motif DNA-binding region spans 116 to 140 (WRGISRNFVVSRTPTQVASHAQKYF). The disordered stretch occupies residues 159–200 (VPDESMDLPPLPGGQEPETQVLNQPALPPPREEEEVDSMESD).

As to expression, expressed in all tissues, with the highest level in senescent leaves.

It is found in the nucleus. Transcription repressor that binds to 5'-TATCCA-3' elements in gene promoters. Contributes to the sugar-repressed transcription of promoters containing SRS or 5'-TATCCA-3' elements. Transcription repressor involved in a cold stress response pathway that confers cold tolerance. Suppresses the DREB1-dependent signaling pathway under prolonged cold stress. DREB1 responds quickly and transiently while MYBS3 responds slowly to cold stress. They may act sequentially and complementarily for adaptation to short- and long-term cold stress. This Oryza sativa subsp. japonica (Rice) protein is Transcription factor MYBS3.